Here is a 68-residue protein sequence, read N- to C-terminus: Frenatin-3 (68 aa).

Positions 1-22 (MHFLKKSIFLVLFLGLVSLSIC) are cleaved as a signal peptide. Residues 23–46 (EKEKREDQNEEEVDENEEESEEKR) constitute a propeptide that is removed on maturation. The segment at 26-47 (KREDQNEEEVDENEEESEEKRG) is disordered. The segment covering 30–42 (QNEEEVDENEEES) has biased composition (acidic residues).

This sequence belongs to the frog skin active peptide (FSAP) family. Frenatin subfamily. In terms of tissue distribution, expressed by the granular skin glands.

It localises to the secreted. Its function is as follows. Antimicrobial peptide with activity against both Gram-positive and Gram-negative bacteria. Antibacterial activities have been tested against Bacillus cereus (MIC=12.5 ug/ml), Escherichia coli (MIC=50 ug/ml), Leuconostoc mesenteroides (MIC=25 ug/ml), Micrococcus luteus (MIC=1.5 ug/ml), Pastewella haemolytica (MIC=0.8 ug/ml), Staphylococcus aureus (MIC&lt;l00 ug/ml), Streptococcus faecalis (MIC&lt;150 ug/ml) and Streptococcus uberis (MIC=50 ug/ml). Strongly inhibits the formation of NO by neuronal nitric oxide synthase (nNOS) at micromolar concentrations. Acts by a non-competitive mechanism, probably by binding to calcium/calmodulin and as a consequence blocking calmodulin attachment to nNOS. The chain is Frenatin-3 from Nyctimystes infrafrenatus (White-lipped tree frog).